The following is a 1175-amino-acid chain: Beta-agarase AgaO (1175 aa).

Residues 1 to 29 (MRLSKSQGILPLAHAVLAAAIAYSTAATA) form the signal peptide. The CBM6 1 domain occupies 32 to 164 (YRLEAEDFTN…QWNLDKMELA (133 aa)). The tract at residues 169–208 (SSSSSGGGSTSSSSSGGSSSSSGSGSSSSGGSPEEGGHVS) is disordered. Residues 178 to 200 (TSSSSSGGSSSSSGSGSSSSGGS) are compositionally biased toward low complexity. A CBM6 2 domain is found at 211 to 339 (FKLEAESAHH…QFNIDYVIFE (129 aa)). The tract at residues 355–481 (IADVNDSCPG…ESGCSPSQVA (127 aa)) is disordered. The span at 382–393 (DTDKDGIADNRD) shows a compositional bias: basic and acidic residues. Residues 471–481 (NESGCSPSQVA) are compositionally biased toward polar residues. Catalysis depends on Glu-661, which acts as the Proton donor. Glu-832 serves as the catalytic Nucleophile.

This sequence belongs to the glycosyl hydrolase 86 family.

The enzyme catalyses Hydrolysis of (1-&gt;4)-beta-D-galactosidic linkages in agarose, giving the tetramer as the predominant product.. Activity and stability are strongly enhanced by CaCl(2). Activity is not affected by sulfhydryl inhibitors such as iodoacetoamide and p-chloromercuribenzoate or by thiol reagents such as dithiothreitol and 2-mercaptoethanol. Strongly inhibited by N-bromosuccinimide and sodium dodecyl sulfate. Endo-type beta-agarase, which degrades agarose and agarose oligosaccharides more polymerized than hexamers to yield neoagarohexaose (NA6) as the main product, with lesser amounts of neoagarotetraose (NA4) and neoagarobiose (NA2). The protein is Beta-agarase AgaO of Microbulbifer thermotolerans.